The following is a 649-amino-acid chain: tRNA-guanine(15) transglycosylase (649 aa).

Asp-88 acts as the Nucleophile in catalysis. Substrate contacts are provided by Asp-123 and Ala-194. Zn(2+)-binding residues include Cys-280, Cys-282, and Cys-285. The region spanning 573–648 (KYRIVIDSSV…VAATLRGGLK (76 aa)) is the PUA domain.

It belongs to the archaeosine tRNA-ribosyltransferase family. The cofactor is Zn(2+).

It carries out the reaction guanosine(15) in tRNA + 7-cyano-7-deazaguanine = 7-cyano-7-carbaguanosine(15) in tRNA + guanine. Its pathway is tRNA modification; archaeosine-tRNA biosynthesis. Exchanges the guanine residue with 7-cyano-7-deazaguanine (preQ0) at position 15 in the dihydrouridine loop (D-loop) of archaeal tRNAs. This is tRNA-guanine(15) transglycosylase from Methanococcus maripaludis (strain C6 / ATCC BAA-1332).